The chain runs to 336 residues: 3-isopropylmalate dehydrogenase (336 aa).

Residues R87, R97, R121, and D211 each coordinate substrate. Residues D211, D235, and D239 each coordinate Mg(2+). 271–283 (GSAPDIAGQGVAD) contributes to the NAD(+) binding site.

Belongs to the isocitrate and isopropylmalate dehydrogenases family. LeuB type 2 subfamily. As to quaternary structure, homodimer. Mg(2+) serves as cofactor. Requires Mn(2+) as cofactor.

It localises to the cytoplasm. The enzyme catalyses (2R,3S)-3-isopropylmalate + NAD(+) = 4-methyl-2-oxopentanoate + CO2 + NADH. Its pathway is amino-acid biosynthesis; L-leucine biosynthesis; L-leucine from 3-methyl-2-oxobutanoate: step 3/4. Catalyzes the oxidation of 3-carboxy-2-hydroxy-4-methylpentanoate (3-isopropylmalate) to 3-carboxy-4-methyl-2-oxopentanoate. The product decarboxylates to 4-methyl-2 oxopentanoate. The protein is 3-isopropylmalate dehydrogenase of Mycobacterium avium (strain 104).